We begin with the raw amino-acid sequence, 1018 residues long: D-2-hydroxyglutarate dehydrogenase (1018 aa).

Residues 48-281 (YQLLPDAVVF…TEARLDITRL (234 aa)) form the FAD-binding PCMH-type domain. Positions 402 and 500 each coordinate (R)-2-hydroxyglutarate. Positions 662–695 (FSHEVKEAMSGCLACKACSTQCPIKIDVPEFRSR) constitute a 4Fe-4S ferredoxin-type domain. [4Fe-4S] cluster contacts are provided by Cys-673, Cys-676, Cys-679, and Cys-683.

In the N-terminal section; belongs to the FAD-binding oxidoreductase/transferase type 4 family. As to quaternary structure, homotetramer. The cofactor is [4Fe-4S] cluster. FAD serves as cofactor.

It catalyses the reaction (R)-2-hydroxyglutarate + A = 2-oxoglutarate + AH2. Its activity is regulated as follows. Activity is completely inhibited by the addition of 0.5 mM Mn(2+), Ni(2+), or Co(2+) and partially inhibited by 0.5 mM Zn(2+). Its function is as follows. Catalyzes the oxidation of D-2-hydroxyglutarate (D-2-HGA) to 2-oxoglutarate. Appears to be the only D2HGDH in E.coli, providing the way to recycle D-2-HGA produced during L-serine synthesis by SerA, by converting it back to 2-oxoglutarate. The physiological molecule that functions as the primary electron acceptor during D-2-HGA oxidation by YdiJ in E.coli is unknown. Shows strict substrate specificity towards D-2-HGA, since it has no detectable activity on L-2-hydroxyglutarate, L-malate, D-malate, L-lactate, D-lactate, L-tartrate, D-tartrate, L-glycerate, D-glycerate, glutarate, or pyruvate. This Escherichia coli (strain K12) protein is D-2-hydroxyglutarate dehydrogenase (ydiJ).